Consider the following 575-residue polypeptide: Thrombomodulin (575 aa).

The N-terminal stretch at 1 to 18 (MLGVLVLGALALAGLGFP) is a signal peptide. The Extracellular portion of the chain corresponds to 19–515 (APAEPQPGGS…TPPAVGLVHS (497 aa)). Residues 31-169 (VEHDCFALYP…VKADGFLCEF (139 aa)) form the C-type lectin domain. N-linked (GlcNAc...) asparagine glycosylation is found at N47, N115, and N116. Cystine bridges form between C137/C158, C245/C256, C252/C265, C267/C280, C288/C296, C292/C308, C310/C323, C329/C340, C336/C349, C351/C362, C369/C378, C374/C388, C390/C404, C408/C413, C417/C425, C427/C439, C445/C455, C451/C464, and C466/C480. EGF-like domains follow at residues 241–281 (GAWD…RSCT) and 284–324 (ATQS…HRCE). The EGF-like 3; calcium-binding domain maps to 325-363 (DVDDCILEPSPCPQRCVNTQGGFECHCYPNYDLVDGECV). N342 is modified ((3R)-3-hydroxyasparagine). EGF-like domains are found at residues 365–405 (PVDP…HRCQ) and 404–440 (CQMF…FICT). N382 carries an N-linked (GlcNAc...) asparagine glycan. N409 carries N-linked (GlcNAc...) asparagine glycosylation. The 41-residue stretch at 441 to 481 (DIDECENGGFCSGVCHNLPGTFECICGPDSALARHIGTDCD) folds into the EGF-like 6; calcium-binding domain. Positions 481–515 (DSGKVDGGDSGSGEPPPSPTPGSTLTPPAVGLVHS) are involved in alpha-L/beta-2 and alpha-M/beta-2 integrin binding. Residues 484 to 506 (KVDGGDSGSGEPPPSPTPGSTLT) are disordered. Residues S490 and S492 are each glycosylated (O-linked (Xyl...) (chondroitin sulfate) serine). Residues 516-539 (GLLIGISIASLCLVVALLALLCHL) traverse the membrane as a helical segment. The Cytoplasmic portion of the chain corresponds to 540–575 (RKKQGAARAKMEYKCAAPSKEVVLQHVRTERTPQRL).

Interacts with ITGAL, ITGAM and ITGB2. Interacts with thrombin/F2; this interaction switches the specificity of thrombin from a procoagulant to an anticoagulant and antifibrinolytic protease. Interacts with ANGP1 and ANGP2; these interactions significantly inhibit the generation of activated PC and TAFIa/CPB2 by the thrombin/thrombomodulin complex. Interacts with PF4; this interaction enhances generation of activated protein C. Interacts with HMGB1; this interaction inhibits HMGB1 inflammatory activity. N-glycosylated. Post-translationally, the iron and 2-oxoglutarate dependent 3-hydroxylation of aspartate and asparagine is (R) stereospecific within EGF domains. As to expression, endothelial cells are unique in synthesizing thrombomodulin.

It localises to the membrane. Functionally, endothelial cell receptor that plays a critical role in regulating several physiological processes including hemostasis, coagulation, fibrinolysis, inflammation, and angiogenesis. Acts as a cofactor for thrombin activation of protein C/PROC on the surface of vascular endothelial cells leading to initiation of the activated protein C anticoagulant pathway. Also accelerates the activation of the plasma carboxypeptidase B2/CPB2, which catalyzes removal of C-terminal basic amino acids from its substrates including kinins or anaphylatoxins leading to fibrinolysis inhibition. Plays critical protective roles in changing the cleavage specificity of protease-activated receptor 1/PAR1, inhibiting endothelial cell permeability and inflammation. Suppresses inflammation distinctly from its anticoagulant cofactor activity by sequestering HMGB1 thereby preventing it from engaging cellular receptors such as RAGE and contributing to the inflammatory response. The protein is Thrombomodulin (THBD) of Homo sapiens (Human).